Here is a 267-residue protein sequence, read N- to C-terminus: Glutamate 5-kinase (267 aa).

K14 is a binding site for ATP. Residues S54, D141, and N157 each coordinate substrate. Residues S177–D178 and T219–K225 contribute to the ATP site.

It belongs to the glutamate 5-kinase family.

It localises to the cytoplasm. The enzyme catalyses L-glutamate + ATP = L-glutamyl 5-phosphate + ADP. The protein operates within amino-acid biosynthesis; L-proline biosynthesis; L-glutamate 5-semialdehyde from L-glutamate: step 1/2. Its function is as follows. Catalyzes the transfer of a phosphate group to glutamate to form L-glutamate 5-phosphate. The chain is Glutamate 5-kinase from Streptococcus agalactiae serotype Ia (strain ATCC 27591 / A909 / CDC SS700).